The sequence spans 512 residues: Respiratory nitrate reductase 1 beta chain (512 aa).

3 consecutive 4Fe-4S ferredoxin-type domains span residues 7-35 (VGMV…SREG), 175-206 (TFMM…KREE), and 208-237 (GIVL…FNWK). Cysteine 16, cysteine 19, cysteine 22, cysteine 26, cysteine 184, cysteine 187, and cysteine 192 together coordinate [4Fe-4S] cluster. Residues cysteine 196, cysteine 217, and cysteine 223 each coordinate [3Fe-4S] cluster. The [4Fe-4S] cluster site is built by cysteine 227, cysteine 244, cysteine 247, cysteine 259, and cysteine 263.

Dimer of heterotrimers each composed of an alpha, a beta and a gamma chain. Alpha and beta are catalytic chains; gamma chains are involved in binding the enzyme complex to the cytoplasmic membrane. Requires [4Fe-4S] cluster as cofactor. [3Fe-4S] cluster serves as cofactor.

The protein resides in the cell membrane. It carries out the reaction nitrate + a quinol = a quinone + nitrite + H2O. Functionally, the nitrate reductase enzyme complex allows S.flexneri to use nitrate as an electron acceptor during anaerobic growth. The beta chain is an electron transfer unit containing four cysteine clusters involved in the formation of iron-sulfur centers. Electrons are transferred from the gamma chain to the molybdenum cofactor of the alpha subunit. In Shigella flexneri, this protein is Respiratory nitrate reductase 1 beta chain (narH).